The sequence spans 559 residues: ADP,ATP carrier protein 1 (559 aa).

Residues 1 to 10 (MNEVENNNHS) show a composition bias toward polar residues. The segment at 1–22 (MNEVENNNHSFPREDIPTEDEI) is disordered. N-linked (GlcNAc...) asparagine glycosylation is present at Asn-8. The next 4 helical transmembrane spans lie at 46–66 (FALLGLMFGIIGFIYSFMRIL), 79–99 (TILFIKIFYILPVSMALVFLI), 111–131 (IFSIFCGGFASLFFLCGAVFL), and 174–194 (IVFISAEMWGSLVLSYLFLSF). The N-linked (GlcNAc...) asparagine glycan is linked to Asn-196. Transmembrane regions (helical) follow at residues 210 to 230 (PLIIITNVSLFLSATVAGAFF) and 242 to 262 (QVLLSGIFIFQGFLVVLVIFL). Asn-290 carries an N-linked (GlcNAc...) asparagine glycan. 3 helical membrane-spanning segments follow: residues 305–325 (LLLAMSLIVLFFNISYNMVES), 354–373 (QYMTSVVVICLNLSPFSSYV), and 377–397 (GFLLVGLITPIVTLMAIVLFL). The N-linked (GlcNAc...) asparagine glycan is linked to Asn-403. The next 3 helical transmembrane spans lie at 425 to 447 (YVLENYFGVIFMSLLKITKYSAF), 473 to 493 (IFGKLGKSIGSIYGLLMFEAL), and 503 to 523 (PITAGIIFIFIVMWVKAIIYL).

This sequence belongs to the ADP/ATP translocase tlc family.

Its subcellular location is the cell membrane. Its function is as follows. ATP transporter involved in the uptake of ATP from the host cell cytoplasm. Provides the microsporidian cell with host ATP in exchange for ADP. This is an obligate exchange system. This energy acquiring activity is an important component of microsporidian parasitism. This Encephalitozoon cuniculi (strain GB-M1) (Microsporidian parasite) protein is ADP,ATP carrier protein 1 (NTT1).